A 313-amino-acid polypeptide reads, in one-letter code: 2,3-dihydroxyphenylpropionate/2,3-dihydroxicinnamic acid 1,2-dioxygenase (313 aa).

Histidine 115 functions as the Proton donor in the catalytic mechanism. Residue histidine 179 is the Proton acceptor of the active site.

Belongs to the LigB/MhpB extradiol dioxygenase family. In terms of assembly, homotetramer. The cofactor is Fe(2+).

It catalyses the reaction 3-(2,3-dihydroxyphenyl)propanoate + O2 = (2Z,4E)-2-hydroxy-6-oxonona-2,4-dienedioate + H(+). It carries out the reaction (2E)-3-(2,3-dihydroxyphenyl)prop-2-enoate + O2 = (2Z,4E,7E)-2-hydroxy-6-oxonona-2,4,7-trienedioate + H(+). It functions in the pathway aromatic compound metabolism; 3-phenylpropanoate degradation. Catalyzes the non-heme iron(II)-dependent oxidative cleavage of 2,3-dihydroxyphenylpropionic acid and 2,3-dihydroxicinnamic acid into 2-hydroxy-6-ketononadienedioate and 2-hydroxy-6-ketononatrienedioate, respectively. This is 2,3-dihydroxyphenylpropionate/2,3-dihydroxicinnamic acid 1,2-dioxygenase from Xanthobacter autotrophicus (strain ATCC BAA-1158 / Py2).